The sequence spans 112 residues: Integration host factor subunit alpha (112 aa).

It belongs to the bacterial histone-like protein family. In terms of assembly, heterodimer of an alpha and a beta chain.

Functionally, this protein is one of the two subunits of integration host factor, a specific DNA-binding protein that functions in genetic recombination as well as in transcriptional and translational control. This Rhizobium leguminosarum bv. trifolii (strain WSM2304) protein is Integration host factor subunit alpha.